The following is a 289-amino-acid chain: RNA exonuclease 4 (289 aa).

Over residues 1–24 (MALSSNWQALLASESNPTSNGKNK) the composition is skewed to polar residues. The disordered stretch occupies residues 1 to 34 (MALSSNWQALLASESNPTSNGKNKQSNRKIRNVK). Residues 25-34 (QSNRKIRNVK) are compositionally biased toward basic residues. The 153-residue stretch at 121–273 (YIAMDCEFVG…EDARATMLLY (153 aa)) folds into the Exonuclease domain.

The protein belongs to the REXO4 family.

It localises to the nucleus. In terms of biological role, exoribonuclease involved in ribosome biosynthesis. Involved in the processing of ITS1, the internal transcribed spacer localized between the 18S and 5.8S rRNAs. This is RNA exonuclease 4 (REX4) from Saccharomyces cerevisiae (strain ATCC 204508 / S288c) (Baker's yeast).